The sequence spans 284 residues: uncharacterized protein (284 aa).

N-linked (GlcNAc...) asparagine; by host glycans are attached at residues Asn79, Asn102, Asn111, Asn147, Asn162, Asn174, Asn196, Asn211, Asn228, and Asn234. The helical transmembrane segment at 239-259 (AFTYGSWGVAMLLFAAVMVLV) threads the bilayer.

The protein belongs to the RL11 family.

It is found in the membrane. This is an uncharacterized protein from Human cytomegalovirus (strain AD169) (HHV-5).